The following is a 745-amino-acid chain: Myeloperoxidase (745 aa).

The first 48 residues, 1-48 (MGVPFFSSLRCMVDLGPCWAGGLTAEMKLLLALAGLLAILATPQPSEG), serve as a signal peptide directing secretion. An N-linked (GlcNAc...) asparagine glycan is attached at Asn139. The cysteines at positions 167 and 180 are disulfide-linked. Asp260 provides a ligand contact to heme b. His261 (proton acceptor) is an active-site residue. Residue Asp262 participates in Ca(2+) binding. 2 disulfide bridges follow: Cys281/Cys291 and Cys285/Cys309. Cysteine sulfenic acid (-SOH) is present on Cys316. Residue Asn323 is glycosylated (N-linked (GlcNAc...) asparagine). Residues Thr334, Phe336, Asp338, and Ser340 each contribute to the Ca(2+) site. 2 N-linked (GlcNAc...) asparagine glycosylation sites follow: Asn355 and Asn391. Cys387 and Cys398 form a disulfide bridge. The heme b site is built by Glu408 and Met409. An N-linked (GlcNAc...) asparagine glycan is attached at Asn483. Residue His502 participates in heme b binding. Disulfide bonds link Cys606-Cys663 and Cys704-Cys730. N-linked (GlcNAc...) asparagine glycosylation is present at Asn729.

Belongs to the peroxidase family. XPO subfamily. As to quaternary structure, homodimer; disulfide-linked. Each monomer consists of a light and a heavy chain. Found in a complex with CP and LTF; interacts directly with CP, which protects CP antioxidant properties by MPO. Ca(2+) is required as a cofactor. It depends on heme b as a cofactor.

The protein resides in the lysosome. It carries out the reaction chloride + H2O2 + H(+) = hypochlorous acid + H2O. Functionally, part of the host defense system of polymorphonuclear leukocytes. It is responsible for microbicidal activity against a wide range of organisms. In the stimulated PMN, MPO catalyzes the production of hypohalous acids, primarily hypochlorous acid in physiologic situations, and other toxic intermediates that greatly enhance PMN microbicidal activity. Mediates the proteolytic cleavage of alpha-1-microglobulin to form t-alpha-1-microglobulin, which potently inhibits oxidation of low-density lipoprotein particles and limits vascular damage. The protein is Myeloperoxidase of Homo sapiens (Human).